Consider the following 734-residue polypeptide: Photosystem I P700 chlorophyll a apoprotein A2 (734 aa).

8 helical membrane-spanning segments follow: residues 46-69 (IFAS…FHVA), 135-158 (LYTG…LHLQ), 175-199 (LNHH…HVAI), 273-291 (MAHH…GHMY), 330-353 (LHFQ…QHMY), 369-395 (AALY…IFFI), 417-439 (AIIS…LYVH), and 517-535 (FLVH…LILV). Residues cysteine 559 and cysteine 568 each coordinate [4Fe-4S] cluster. A run of 2 helical transmembrane segments spans residues 575–596 (AFYL…YWHW) and 643–665 (LSVW…MFLI). Residues histidine 654, methionine 662, and tyrosine 670 each coordinate chlorophyll a. Tryptophan 671 lines the phylloquinone pocket. A helical membrane pass occupies residues 707 to 727 (LVGLAHFSVGYIFTYAAFLIA).

This sequence belongs to the PsaA/PsaB family. The PsaA/B heterodimer binds the P700 chlorophyll special pair and subsequent electron acceptors. PSI consists of a core antenna complex that captures photons, and an electron transfer chain that converts photonic excitation into a charge separation. The eukaryotic PSI reaction center is composed of at least 11 subunits. The cofactor is P700 is a chlorophyll a/chlorophyll a' dimer, A0 is one or more chlorophyll a, A1 is one or both phylloquinones and FX is a shared 4Fe-4S iron-sulfur center..

It localises to the plastid. The protein resides in the chloroplast thylakoid membrane. It catalyses the reaction reduced [plastocyanin] + hnu + oxidized [2Fe-2S]-[ferredoxin] = oxidized [plastocyanin] + reduced [2Fe-2S]-[ferredoxin]. Its function is as follows. PsaA and PsaB bind P700, the primary electron donor of photosystem I (PSI), as well as the electron acceptors A0, A1 and FX. PSI is a plastocyanin-ferredoxin oxidoreductase, converting photonic excitation into a charge separation, which transfers an electron from the donor P700 chlorophyll pair to the spectroscopically characterized acceptors A0, A1, FX, FA and FB in turn. Oxidized P700 is reduced on the lumenal side of the thylakoid membrane by plastocyanin. The sequence is that of Photosystem I P700 chlorophyll a apoprotein A2 from Daucus carota (Wild carrot).